A 542-amino-acid chain; its full sequence is Chaperonin GroEL (542 aa).

ATP is bound by residues 29-32 (TLGP), 86-90 (DGTTT), G413, 476-478 (NAA), and D492.

Belongs to the chaperonin (HSP60) family. As to quaternary structure, forms a cylinder of 14 subunits composed of two heptameric rings stacked back-to-back. Interacts with the co-chaperonin GroES.

It is found in the cytoplasm. It carries out the reaction ATP + H2O + a folded polypeptide = ADP + phosphate + an unfolded polypeptide.. Functionally, together with its co-chaperonin GroES, plays an essential role in assisting protein folding. The GroEL-GroES system forms a nano-cage that allows encapsulation of the non-native substrate proteins and provides a physical environment optimized to promote and accelerate protein folding. In Lactococcus lactis subsp. cremoris (strain SK11), this protein is Chaperonin GroEL.